The primary structure comprises 287 residues: ATP synthase subunit a (287 aa).

Helical transmembrane passes span 37 to 57 (LDSV…MWLA), 96 to 116 (FIAP…AMDL), 149 to 169 (LGLS…IKGL), 187 to 207 (PVFA…EYVA), 224 to 244 (ELVF…LSGV), and 266 to 286 (TLQA…AHEA).

This sequence belongs to the ATPase A chain family. As to quaternary structure, F-type ATPases have 2 components, CF(1) - the catalytic core - and CF(0) - the membrane proton channel. CF(1) has five subunits: alpha(3), beta(3), gamma(1), delta(1), epsilon(1). CF(0) has three main subunits: a(1), b(2) and c(9-12). The alpha and beta chains form an alternating ring which encloses part of the gamma chain. CF(1) is attached to CF(0) by a central stalk formed by the gamma and epsilon chains, while a peripheral stalk is formed by the delta and b chains.

It localises to the cell inner membrane. Key component of the proton channel; it plays a direct role in the translocation of protons across the membrane. This chain is ATP synthase subunit a, found in Acidovorax sp. (strain JS42).